Reading from the N-terminus, the 575-residue chain is MNILELSEQEIIRRNSLNELRAMGIEPYPAAEYVTNAFSTDIKAEFKDDETPRQVSVAGRMMSRRIMGKASFIELQDSKGRIQVYITRDDICPGEDKEMYNTVFKRLLDLGDFIGIEGFVFRTQMGEISIHAQKLTVLAKSIKPLPIVKYKDGVTYDSFEDPELRYRQRYVDLAVNEGVKDIFIKRSKVYSSMREYFNSKGYMEVETPILQAIAGGAAARPFMTHHNALDIPLYMRIASELYLKRLIVGGFEGVYEIGKNFRNEGMDRTHNPEFTCMEIYVAYKDYNWMMEFTEKMIEKICLDVNGTTEVKVGDNIINFKAPYKRVTMLGAIKEHTGYDLTGMNEEQIREVCKKLNMEIDDTMGKGKLIDEIFGEFCEGTYIQPTFITDYPIEMSPLTKKHRDNPELTERFELMVNGKELCNAYSELNDPIDQLERFEDQMKLSEKGDDEAMIIDKDFVRALEYGMPPTSGMGIGMDRLTMLMTGQSTIQEVLFFPQMRPEKVVPKDSASKFMELGITEEWVPVIQKAGYNQVADMKEVNPQKFHQDICGINKKYKLELTNPSVNDVAEWIQKIK.

Mg(2+) is bound by residues E412 and E419.

This sequence belongs to the class-II aminoacyl-tRNA synthetase family. Homodimer. It depends on Mg(2+) as a cofactor.

It is found in the cytoplasm. It catalyses the reaction tRNA(Lys) + L-lysine + ATP = L-lysyl-tRNA(Lys) + AMP + diphosphate. The chain is Lysine--tRNA ligase from Bacteroides fragilis (strain YCH46).